Reading from the N-terminus, the 62-residue chain is MQKLLIILILFCILKFNVDVEGRTATMCDLPECQERCKRQNKKGKCVIEPEMNIVYHLCKCY.

The N-terminal stretch at 1 to 22 is a signal peptide; the sequence is MQKLLIILILFCILKFNVDVEG. Disulfide bonds link Cys28–Cys46, Cys33–Cys59, and Cys37–Cys61.

The protein belongs to the short scorpion toxin superfamily. Potassium channel inhibitor family. Alpha-KTx 23 subfamily. As to expression, expressed by the venom gland.

Its subcellular location is the secreted. Functionally, may block potassium channels. This Hottentotta judaicus (Black scorpion) protein is U10-hottentoxin-Hj3a.